The chain runs to 351 residues: DNA polymerase IV (351 aa).

One can recognise a UmuC domain in the interval 4–185 (IIHIDMDCFF…LPLAKIPGVG (182 aa)). The Mg(2+) site is built by Asp-8 and Asp-103. Glu-104 is a catalytic residue.

The protein belongs to the DNA polymerase type-Y family. As to quaternary structure, monomer. Requires Mg(2+) as cofactor.

The protein resides in the cytoplasm. It carries out the reaction DNA(n) + a 2'-deoxyribonucleoside 5'-triphosphate = DNA(n+1) + diphosphate. Poorly processive, error-prone DNA polymerase involved in untargeted mutagenesis. Copies undamaged DNA at stalled replication forks, which arise in vivo from mismatched or misaligned primer ends. These misaligned primers can be extended by PolIV. Exhibits no 3'-5' exonuclease (proofreading) activity. May be involved in translesional synthesis, in conjunction with the beta clamp from PolIII. The sequence is that of DNA polymerase IV from Salmonella paratyphi A (strain ATCC 9150 / SARB42).